The sequence spans 446 residues: tRNA modification GTPase MnmE (446 aa).

Residues Arg-24, Glu-81, and Lys-120 each contribute to the (6S)-5-formyl-5,6,7,8-tetrahydrofolate site. A TrmE-type G domain is found at 216 to 368; the sequence is GLHAVLIGPP…LHIRLRALAL (153 aa). Asn-226 lines the K(+) pocket. Residues 226–231, 245–251, and 270–273 each bind GTP; these read NAGKSS, TDVAGTT, and DTAG. Ser-230 provides a ligand contact to Mg(2+). K(+) contacts are provided by Thr-245, Val-247, and Thr-250. Thr-251 lines the Mg(2+) pocket. A (6S)-5-formyl-5,6,7,8-tetrahydrofolate-binding site is contributed by Lys-446.

The protein belongs to the TRAFAC class TrmE-Era-EngA-EngB-Septin-like GTPase superfamily. TrmE GTPase family. Homodimer. Heterotetramer of two MnmE and two MnmG subunits. K(+) serves as cofactor.

The protein localises to the cytoplasm. Exhibits a very high intrinsic GTPase hydrolysis rate. Involved in the addition of a carboxymethylaminomethyl (cmnm) group at the wobble position (U34) of certain tRNAs, forming tRNA-cmnm(5)s(2)U34. The protein is tRNA modification GTPase MnmE of Xanthomonas euvesicatoria pv. vesicatoria (strain 85-10) (Xanthomonas campestris pv. vesicatoria).